The chain runs to 224 residues: Propanediol dehydratase medium subunit (224 aa).

The interval 1–18 (MEINEKLLRQIIEDVLRD) is targets protein to the BMC.

The protein belongs to the diol/glycerol dehydratase medium subunit family. In terms of assembly, the propanediol dehydratase enzyme is a heterotrimeric complex composed of a large (PduC), a medium (PduD) and a small (PduE) subunit. It depends on adenosylcob(III)alamin as a cofactor.

Its subcellular location is the bacterial microcompartment. It carries out the reaction propane-1,2-diol = propanal + H2O. It participates in polyol metabolism; 1,2-propanediol degradation. Its activity is regulated as follows. Inhibited by glycerol. Its function is as follows. Part of the PduCDE complex that catalyzes the dehydration of 1,2-propanediol (1,2-PD) to propionaldehyde. Required for S.typhimurium growth on 1,2-PD as the sole carbon and energy source. This subunit is directly targeted to the bacterial microcompartment (BMC) dedicated to 1,2-PD degradation, and is also responsible for targeting the other 2 subunits (pduC and pduE). Functionally, the 1,2-PD-specific bacterial microcompartment (BMC) concentrates low levels of 1,2-PD catabolic enzymes, concentrates volatile reaction intermediates thus enhancing pathway flux and keeps the level of toxic, mutagenic propionaldehyde low. This Salmonella typhimurium (strain LT2 / SGSC1412 / ATCC 700720) protein is Propanediol dehydratase medium subunit.